The sequence spans 631 residues: MKFMKLGSRPDTFYTSEDLRCVSSEVSSDFTIEVSGSRYLLHKFPLLSKCLRLQRMCSESPESIIQLPEFPGGVEAFELCAKFCYGITITISAYNIVAARCAAEYLQMSEEVEKGNLVYKLEVFFNSCILNGWRDSIVTLQTTKAFPLWSEDLAITSRCIEAIASKVLSHPSKVSLSHSHSRRVRDDDMSSNRAAASSRGWWAEDIAELGIDLYWRTMIAIKSGGKVPASLIGDALRVYASKWLPTLQRNRKVVKKKEDSDSDSDTDTSSKHRLLLESIISLLPAEKGAVSCSFLLKLLKAANILNASTSSKMELARRVALQLEEATVSDLLIPPMSYKSELLYDVDIVATILEQFMVQGQTSPPTSPLRGKKGMMDRRRRSRSAENIDLEFQESRRSSSASHSSKLKVAKLVDGYLQQIARDVNLPLSKFVTLAESVPEFSRLDHDDLYRAIDIYLKAHKNLNKSERKRVCRVLDCKKLSMEACMHAAQNEMLPLRVVVQVLFYEQARAAAATNNGEKNTTELPSNIKALLAAHNIDPSNPNAAAFSTTTSIAAPEDRWSVSGLKSPKSKLSGTLRSKLAEDEEVDERFMNGDGGRTPSRFKAFCAIPGRPKKMFSKLLSINRNSSDKNC.

A BTB domain is found at 28–93 (SDFTIEVSGS…CYGITITISA (66 aa)). The NPH3 domain occupies 200-509 (GWWAEDIAEL…VQVLFYEQAR (310 aa)). The disordered stretch occupies residues 361-399 (QTSPPTSPLRGKKGMMDRRRRSRSAENIDLEFQESRRSS). The segment covering 370-382 (RGKKGMMDRRRRS) has biased composition (basic residues). Phosphotyrosine is present on tyrosine 450. Phosphoserine is present on serine 567.

This sequence belongs to the NPH3 family.

Its pathway is protein modification; protein ubiquitination. Functionally, may act as a substrate-specific adapter of an E3 ubiquitin-protein ligase complex (CUL3-RBX1-BTB) which mediates the ubiquitination and subsequent proteasomal degradation of target proteins. This Arabidopsis thaliana (Mouse-ear cress) protein is BTB/POZ domain-containing protein At1g67900.